We begin with the raw amino-acid sequence, 364 residues long: Cell division protein FtsZ 1 (364 aa).

Residues 47 to 48 (GA), 97 to 99 (AGG), 134 to 136 (GTG), Glu165, Arg169, and Asp212 each bind GTP.

Belongs to the FtsZ family. As to quaternary structure, homodimer. Polymerizes to form a dynamic ring structure in a strictly GTP-dependent manner. Interacts directly with several other division proteins.

It localises to the cytoplasm. In terms of biological role, essential cell division protein that forms a contractile ring structure (Z ring) at the future cell division site. The regulation of the ring assembly controls the timing and the location of cell division. One of the functions of the FtsZ ring is to recruit other cell division proteins to the septum to produce a new cell wall between the dividing cells. Binds GTP and shows GTPase activity. The sequence is that of Cell division protein FtsZ 1 from Methanocaldococcus jannaschii (strain ATCC 43067 / DSM 2661 / JAL-1 / JCM 10045 / NBRC 100440) (Methanococcus jannaschii).